The following is a 360-amino-acid chain: Heme A synthase (360 aa).

5 helical membrane-spanning segments follow: residues 13 to 33 (AVRW…LVGG), 99 to 119 (LLGR…LWRG), 129 to 149 (LWLL…MVAS), 160 to 180 (YRLA…VWTV), and 199 to 219 (SALL…VAGL). H263 is a binding site for heme. Helical transmembrane passes span 265–282 (MTAY…FDAV), 292–312 (GALW…LTLL), and 315–335 (VPIG…TLAV). Heme is bound at residue H323.

This sequence belongs to the COX15/CtaA family. Type 2 subfamily. In terms of assembly, interacts with CtaB. Heme b serves as cofactor.

It is found in the cell membrane. It carries out the reaction Fe(II)-heme o + 2 A + H2O = Fe(II)-heme a + 2 AH2. It functions in the pathway porphyrin-containing compound metabolism; heme A biosynthesis; heme A from heme O: step 1/1. In terms of biological role, catalyzes the conversion of heme O to heme A by two successive hydroxylations of the methyl group at C8. The first hydroxylation forms heme I, the second hydroxylation results in an unstable dihydroxymethyl group, which spontaneously dehydrates, resulting in the formyl group of heme A. This is Heme A synthase from Bradyrhizobium diazoefficiens (strain JCM 10833 / BCRC 13528 / IAM 13628 / NBRC 14792 / USDA 110).